The primary structure comprises 190 residues: dITP/XTP pyrophosphatase (190 aa).

Substrate is bound at residue 7–12 (THNPNK). Glutamate 39 and aspartate 68 together coordinate Mg(2+). Aspartate 68 (proton acceptor) is an active-site residue. Residues threonine 69, 148–151 (FGYD), lysine 171, and 176–177 (HR) each bind substrate.

Belongs to the HAM1 NTPase family. Homodimer. It depends on Mg(2+) as a cofactor.

The catalysed reaction is XTP + H2O = XMP + diphosphate + H(+). It catalyses the reaction dITP + H2O = dIMP + diphosphate + H(+). It carries out the reaction ITP + H2O = IMP + diphosphate + H(+). In terms of biological role, pyrophosphatase that catalyzes the hydrolysis of nucleoside triphosphates to their monophosphate derivatives, with a high preference for the non-canonical purine nucleotides XTP (xanthosine triphosphate), dITP (deoxyinosine triphosphate) and ITP. Seems to function as a house-cleaning enzyme that removes non-canonical purine nucleotides from the nucleotide pool, thus preventing their incorporation into DNA/RNA and avoiding chromosomal lesions. The protein is dITP/XTP pyrophosphatase of Christiangramia forsetii (strain DSM 17595 / CGMCC 1.15422 / KT0803) (Gramella forsetii).